Reading from the N-terminus, the 295-residue chain is Acetyl-coenzyme A carboxylase carboxyl transferase subunit beta (295 aa).

A disordered region spans residues 1-20 (MSWLSKLMPSGIRTENTPAK). The CoA carboxyltransferase N-terminal domain occupies 28–295 (LWEKCSNCGS…QPHPQDADAA (268 aa)). Zn(2+)-binding residues include cysteine 32, cysteine 35, cysteine 51, and cysteine 54. The segment at 32-54 (CSNCGSALYGPELEENLEVCPKC) adopts a C4-type zinc-finger fold.

It belongs to the AccD/PCCB family. In terms of assembly, acetyl-CoA carboxylase is a heterohexamer composed of biotin carboxyl carrier protein (AccB), biotin carboxylase (AccC) and two subunits each of ACCase subunit alpha (AccA) and ACCase subunit beta (AccD). Zn(2+) is required as a cofactor.

It is found in the cytoplasm. The enzyme catalyses N(6)-carboxybiotinyl-L-lysyl-[protein] + acetyl-CoA = N(6)-biotinyl-L-lysyl-[protein] + malonyl-CoA. It functions in the pathway lipid metabolism; malonyl-CoA biosynthesis; malonyl-CoA from acetyl-CoA: step 1/1. Its function is as follows. Component of the acetyl coenzyme A carboxylase (ACC) complex. Biotin carboxylase (BC) catalyzes the carboxylation of biotin on its carrier protein (BCCP) and then the CO(2) group is transferred by the transcarboxylase to acetyl-CoA to form malonyl-CoA. This chain is Acetyl-coenzyme A carboxylase carboxyl transferase subunit beta, found in Xanthomonas oryzae pv. oryzae (strain MAFF 311018).